The sequence spans 104 residues: Large ribosomal subunit protein bL28 (104 aa).

This sequence belongs to the bacterial ribosomal protein bL28 family.

This chain is Large ribosomal subunit protein bL28, found in Wolbachia pipientis wMel.